The primary structure comprises 328 residues: Phosphate acyltransferase (328 aa).

The protein belongs to the PlsX family. Homodimer. Probably interacts with PlsY.

It localises to the cytoplasm. The catalysed reaction is a fatty acyl-[ACP] + phosphate = an acyl phosphate + holo-[ACP]. The protein operates within lipid metabolism; phospholipid metabolism. Functionally, catalyzes the reversible formation of acyl-phosphate (acyl-PO(4)) from acyl-[acyl-carrier-protein] (acyl-ACP). This enzyme utilizes acyl-ACP as fatty acyl donor, but not acyl-CoA. In Staphylococcus haemolyticus (strain JCSC1435), this protein is Phosphate acyltransferase.